The sequence spans 371 residues: Large ribosomal subunit protein bL27m (371 aa).

A mitochondrion-targeting transit peptide spans 1–27 (MWNPILLDTSSFSFQKHVSGVFLQVRN).

This sequence belongs to the bacterial ribosomal protein bL27 family. In terms of assembly, component of the mitochondrial large ribosomal subunit (mt-LSU). Mature yeast 74S mitochondrial ribosomes consist of a small (37S) and a large (54S) subunit. The 37S small subunit contains a 15S ribosomal RNA (15S mt-rRNA) and 34 different proteins. The 54S large subunit contains a 21S rRNA (21S mt-rRNA) and 46 different proteins.

The protein localises to the mitochondrion. Component of the mitochondrial ribosome (mitoribosome), a dedicated translation machinery responsible for the synthesis of mitochondrial genome-encoded proteins, including at least some of the essential transmembrane subunits of the mitochondrial respiratory chain. The mitoribosomes are attached to the mitochondrial inner membrane and translation products are cotranslationally integrated into the membrane. The polypeptide is Large ribosomal subunit protein bL27m (MRP7) (Saccharomyces cerevisiae (strain ATCC 204508 / S288c) (Baker's yeast)).